The following is a 530-amino-acid chain: Tegument protein UL21 homolog (530 aa).

Belongs to the alphaherpesvirinae UL21 protein family. In terms of assembly, interacts (via C-terminus) with UL16.

It localises to the virion tegument. The protein localises to the host cytoplasm. The protein resides in the host nucleus. In terms of biological role, may participate in DNA packaging/capsid maturation events. Promotes efficient incorporation of tegument proteins UL46, UL49, and US3 homologs into virions. May also play a role in capsid transport to the trans-Golgi network (TGN). The chain is Tegument protein UL21 homolog from Equus caballus (Horse).